The sequence spans 405 residues: Methylamine dehydrogenase heavy chain (405 aa).

Positions 1–36 (MTTFDHPSMIRQPKPTGLAGGLVLAALMLSSSLALA) are cleaved as a signal peptide.

This sequence belongs to the aromatic amine dehydrogenase heavy chain family. In terms of assembly, tetramer of two light and two heavy chains.

The protein localises to the periplasm. The enzyme catalyses 2 oxidized [amicyanin] + methylamine + H2O = 2 reduced [amicyanin] + formaldehyde + NH4(+) + 2 H(+). In terms of biological role, methylamine dehydrogenase carries out the oxidation of methylamine. Electrons are passed from methylamine dehydrogenase to amicyanin. The protein is Methylamine dehydrogenase heavy chain (mauB) of Methylophilus methylotrophus (Bacterium W3A1).